The sequence spans 85 residues: UPF0386 protein HNE_3437 (85 aa).

The protein belongs to the UPF0386 family.

The chain is UPF0386 protein HNE_3437 from Hyphomonas neptunium (strain ATCC 15444).